A 427-amino-acid chain; its full sequence is Serine--tRNA ligase (427 aa).

233 to 235 serves as a coordination point for L-serine; the sequence is TAE. Residue 264–266 coordinates ATP; the sequence is RSE. Position 287 (Glu-287) interacts with L-serine. 351–354 lines the ATP pocket; that stretch reads EISS. Residue Ser-386 coordinates L-serine.

The protein belongs to the class-II aminoacyl-tRNA synthetase family. Type-1 seryl-tRNA synthetase subfamily. In terms of assembly, homodimer. The tRNA molecule binds across the dimer.

It localises to the cytoplasm. The catalysed reaction is tRNA(Ser) + L-serine + ATP = L-seryl-tRNA(Ser) + AMP + diphosphate + H(+). It carries out the reaction tRNA(Sec) + L-serine + ATP = L-seryl-tRNA(Sec) + AMP + diphosphate + H(+). It functions in the pathway aminoacyl-tRNA biosynthesis; selenocysteinyl-tRNA(Sec) biosynthesis; L-seryl-tRNA(Sec) from L-serine and tRNA(Sec): step 1/1. In terms of biological role, catalyzes the attachment of serine to tRNA(Ser). Is also able to aminoacylate tRNA(Sec) with serine, to form the misacylated tRNA L-seryl-tRNA(Sec), which will be further converted into selenocysteinyl-tRNA(Sec). In Thiobacillus denitrificans (strain ATCC 25259 / T1), this protein is Serine--tRNA ligase.